Here is a 454-residue protein sequence, read N- to C-terminus: Flavonoid 3-O-glucosyltransferase (454 aa).

A UDP-binding site is contributed by Thr-25. His-26 functions as the Proton acceptor in the catalytic mechanism. Arg-89 contacts myricetin. Residue Asp-124 is the Charge relay of the active site. Myricetin-binding residues include His-155, Glu-192, and Phe-202. UDP is bound by residues Ser-282, Ser-308, Trp-334, and Ala-335. UDP-alpha-D-glucose contacts are provided by Ala-335, Gln-337, His-352, Trp-355, Asn-356, Ser-357, and Glu-360. His-352 contributes to the UDP binding site. Residues Asn-356, Ser-357, and Glu-360 each coordinate UDP. Gly-375 is a myricetin binding site. The UDP-alpha-D-glucose site is built by Asp-376 and Gln-377.

Belongs to the UDP-glycosyltransferase family. In terms of tissue distribution, highly expressed in flower buds, flowers and pods. Lower expression in leaves, petioles and stems.

It participates in secondary metabolite biosynthesis; flavonoid biosynthesis. In terms of biological role, catalyzes the glycosylation of flavonoids at the 3-O-position. Glycosylates the 7-O-position if the 3-O-position is not available. Also able to perform 3-O-glycosylation of anthocyanidins. The polypeptide is Flavonoid 3-O-glucosyltransferase (UGT78G1) (Medicago truncatula (Barrel medic)).